We begin with the raw amino-acid sequence, 1980 residues long: Unconventional myosin-IXb (1980 aa).

S2 is subject to N-acetylserine. The Ras-associating domain maps to 15–114 (ATFHLHIYPQ…YYFLLQERNA (100 aa)). Residues 146-954 (ADFDDLCNLP…ERQALQERLH (809 aa)) enclose the Myosin motor domain. 239–246 (GESGSGKT) lines the ATP pocket. The disordered stretch occupies residues 715-736 (GVSSPVTRSHVEELPRGANTPS). S717 and S718 each carry phosphoserine. The tract at residues 845-856 (KAEPFFIRCIRS) is actin-binding. The neck or regulatory domain stretch occupies residues 941–1045 (LKETERQALQ…CRGHLQRRSF (105 aa)). 4 consecutive IQ domains span residues 958–978 (LRRI…RHFV), 981–1001 (KHAA…RTLE), 1002–1024 (RTRA…AYHH), and 1025–1054 (QRHS…EKQK). The residue at position 1046 (S1046) is a Phosphoserine. Residues 1046 to 1980 (SQMMLEKQKA…ERAVRGAAEE (935 aa)) are tail. 3 disordered regions span residues 1049 to 1281 (MLEK…HPDT), 1302 to 1380 (SQSL…QGDS), and 1394 to 1449 (DKKP…NRKV). The segment covering 1097-1106 (TWMNSKSPNG) has biased composition (polar residues). A phosphoserine mark is found at S1108, S1115, and S1177. Composition is skewed to basic and acidic residues over residues 1129–1177 (ESHE…RKAS) and 1186–1195 (EDTKEPREDG). Residues S1220, S1222, S1229, S1237, S1243, and S1247 each carry the phosphoserine modification. Residues 1235 to 1247 (RVSPVLPSSSLES) show a composition bias toward low complexity. The segment covering 1250-1265 (DEDKGENSTKVQDKPE) has biased composition (basic and acidic residues). A phosphoserine mark is found at S1266, S1268, and S1304. Phosphothreonine is present on T1319. Phosphoserine is present on residues S1327, S1329, and S1337. Polar residues predominate over residues 1327 to 1344 (SFSTSDVSKLSPVKTSTE). Residues 1592-1641 (GHVFASYQVNIPQSCEQCLSYIWLMDKALLCSVCKMTCHKKCVHKIQSYC) form a Phorbol-ester/DAG-type zinc finger. The residue at position 1649 (S1649) is a Phosphoserine. A Rho-GAP domain is found at 1663-1848 (DSLTSDKASV…MLIKEQMRKY (186 aa)). Positions 1699-1704 (AANRTR) are interaction with RHOA. Residues 1841 to 1861 (IKEQMRKYKVKMEEINHLEAA) are a coiled coil. S1886 carries the post-translational modification Phosphoserine. A disordered region spans residues 1891–1923 (VRTKSPRTPVVQDLEELGALPEEAAGGDEDREK). A coiled-coil region spans residues 1918-1948 (DEDREKEILMERIQSIKEEKEDITYRLPELD). S1932, S1952, and S1959 each carry phosphoserine. Positions 1937 to 1953 (KEDITYRLPELDPRGSD) are enriched in basic and acidic residues. Positions 1937–1980 (KEDITYRLPELDPRGSDEENLDSETSASTESLLEERAVRGAAEE) are disordered. T1965 is modified (phosphothreonine). Positions 1969 to 1980 (LEERAVRGAAEE) are enriched in basic and acidic residues.

It belongs to the TRAFAC class myosin-kinesin ATPase superfamily. Myosin family. In terms of assembly, interacts (via IQ domains) with CALM. Interacts with RHOA. Interacts (via Rho-GAP domain) with ROBO1; this inhibits the interaction with RHOA and the stimulation of RHOA GTPase activity, and thereby increases the levels of active RHOA. As to expression, expressed in testis, lung, thymus, brain, liver, spleen and heart muscle. Detected in lung, testis, spleen and liver, and at reduced level in different brain regions (at protein level).

The protein resides in the cytoplasm. It is found in the cell cortex. The protein localises to the perinuclear region. It localises to the cytoskeleton. Its function is as follows. Myosins are actin-based motor molecules with ATPase activity. Unconventional myosins serve in intracellular movements. Binds actin with high affinity both in the absence and presence of ATP and its mechanochemical activity is inhibited by calcium ions. Also acts as a GTPase activator for RHOA. Plays a role in the regulation of cell migration via its role as RHOA GTPase activator. This is regulated by its interaction with the SLIT2 receptor ROBO1; interaction with ROBO1 impairs interaction with RHOA and subsequent activation of RHOA GTPase activity, and thereby leads to increased levels of active, GTP-bound RHOA. The sequence is that of Unconventional myosin-IXb (Myo9b) from Rattus norvegicus (Rat).